The following is a 470-amino-acid chain: Cysteine--tRNA ligase (470 aa).

Residue Cys-30 participates in Zn(2+) binding. The 'HIGH' region signature appears at 32–42; that stretch reads PTVYNYIHIGN. The Zn(2+) site is built by Cys-211, His-236, and Glu-240. The 'KMSKS' region signature appears at 268-272; sequence KMSKS. Position 271 (Lys-271) interacts with ATP.

Belongs to the class-I aminoacyl-tRNA synthetase family. Monomer. The cofactor is Zn(2+).

The protein resides in the cytoplasm. It catalyses the reaction tRNA(Cys) + L-cysteine + ATP = L-cysteinyl-tRNA(Cys) + AMP + diphosphate. The protein is Cysteine--tRNA ligase of Fervidobacterium nodosum (strain ATCC 35602 / DSM 5306 / Rt17-B1).